A 304-amino-acid chain; its full sequence is GDP-6-deoxy-D-mannose reductase (304 aa).

Residues 13–14 and 39–40 each bind NADP(+); these read FV and DL. 105–106 lines the substrate pocket; that stretch reads SG. NADP(+) is bound at residue Y131. Residues N160, R200, and 260-263 each bind substrate; that span reads RRAE.

Belongs to the NAD(P)-dependent epimerase/dehydratase family. GDP-6-deoxy-D-mannose reductase subfamily.

It carries out the reaction GDP-alpha-D-rhamnose + NAD(+) = GDP-4-dehydro-alpha-D-rhamnose + NADH + H(+). The catalysed reaction is GDP-alpha-D-rhamnose + NADP(+) = GDP-4-dehydro-alpha-D-rhamnose + NADPH + H(+). Reductase that catalyzes the conversion of GDP-6-deoxy-D-mannose to GDP-4-dehydro-6-deoxy-D-mannose (GDP-D-rhamnose). The sequence is that of GDP-6-deoxy-D-mannose reductase (rmd) from Pseudomonas aeruginosa (strain ATCC 15692 / DSM 22644 / CIP 104116 / JCM 14847 / LMG 12228 / 1C / PRS 101 / PAO1).